A 348-amino-acid polypeptide reads, in one-letter code: UDP-3-O-acylglucosamine N-acyltransferase (348 aa).

The active-site Proton acceptor is the His243.

It belongs to the transferase hexapeptide repeat family. LpxD subfamily. Homotrimer.

It catalyses the reaction a UDP-3-O-[(3R)-3-hydroxyacyl]-alpha-D-glucosamine + a (3R)-hydroxyacyl-[ACP] = a UDP-2-N,3-O-bis[(3R)-3-hydroxyacyl]-alpha-D-glucosamine + holo-[ACP] + H(+). Its pathway is bacterial outer membrane biogenesis; LPS lipid A biosynthesis. Catalyzes the N-acylation of UDP-3-O-acylglucosamine using 3-hydroxyacyl-ACP as the acyl donor. Is involved in the biosynthesis of lipid A, a phosphorylated glycolipid that anchors the lipopolysaccharide to the outer membrane of the cell. The sequence is that of UDP-3-O-acylglucosamine N-acyltransferase from Hahella chejuensis (strain KCTC 2396).